Here is a 305-residue protein sequence, read N- to C-terminus: UDP-3-O-acyl-N-acetylglucosamine deacetylase (305 aa).

Zn(2+)-binding residues include His-79, His-238, and Asp-242. His-265 acts as the Proton donor in catalysis.

It belongs to the LpxC family. Zn(2+) serves as cofactor.

It catalyses the reaction a UDP-3-O-[(3R)-3-hydroxyacyl]-N-acetyl-alpha-D-glucosamine + H2O = a UDP-3-O-[(3R)-3-hydroxyacyl]-alpha-D-glucosamine + acetate. Its pathway is glycolipid biosynthesis; lipid IV(A) biosynthesis; lipid IV(A) from (3R)-3-hydroxytetradecanoyl-[acyl-carrier-protein] and UDP-N-acetyl-alpha-D-glucosamine: step 2/6. Its function is as follows. Catalyzes the hydrolysis of UDP-3-O-myristoyl-N-acetylglucosamine to form UDP-3-O-myristoylglucosamine and acetate, the committed step in lipid A biosynthesis. The protein is UDP-3-O-acyl-N-acetylglucosamine deacetylase of Salmonella arizonae (strain ATCC BAA-731 / CDC346-86 / RSK2980).